Here is a 205-residue protein sequence, read N- to C-terminus: Pyridoxine/pyridoxamine 5'-phosphate oxidase (205 aa).

FMN-binding positions include 53 to 58, 68 to 69, lysine 75, and glutamine 97; these read RMVLLK and YT. Lysine 58 contributes to the substrate binding site. Residues tyrosine 115, arginine 119, and serine 123 each coordinate substrate. FMN-binding positions include 132–133 and tryptophan 177; that span reads QS. A substrate-binding site is contributed by 183–185; it reads RLH. Arginine 187 provides a ligand contact to FMN.

It belongs to the pyridoxamine 5'-phosphate oxidase family. In terms of assembly, homodimer. Requires FMN as cofactor.

The catalysed reaction is pyridoxamine 5'-phosphate + O2 + H2O = pyridoxal 5'-phosphate + H2O2 + NH4(+). It catalyses the reaction pyridoxine 5'-phosphate + O2 = pyridoxal 5'-phosphate + H2O2. It functions in the pathway cofactor metabolism; pyridoxal 5'-phosphate salvage; pyridoxal 5'-phosphate from pyridoxamine 5'-phosphate: step 1/1. It participates in cofactor metabolism; pyridoxal 5'-phosphate salvage; pyridoxal 5'-phosphate from pyridoxine 5'-phosphate: step 1/1. Its function is as follows. Catalyzes the oxidation of either pyridoxine 5'-phosphate (PNP) or pyridoxamine 5'-phosphate (PMP) into pyridoxal 5'-phosphate (PLP). This is Pyridoxine/pyridoxamine 5'-phosphate oxidase from Mesorhizobium japonicum (strain LMG 29417 / CECT 9101 / MAFF 303099) (Mesorhizobium loti (strain MAFF 303099)).